The sequence spans 394 residues: MAKKLFMFEKPLGMRDTLPFLYELKKQVRSVMAEEIERWGYEFIETPTLEYYETVGAASAIADHRLFKLLDQQGHTLVLRPDMTAPIARVAASRLYDDGNPLRLAYNANVFRAQQREGGRPAEFEQIGVELIGDGTVTADAEVISLMVALLKRTGLGRFSVAVGHIGYVNALFLEILGNEERASVLRRFLYEKNYVGYREHVKSWPLSSIDQKRLLDLLSLRGGTDVIEQAKTLVTSEKGRRAADELAVLMAVLRTYGVAEAVKLDMALVSHMSYYTGILFEVYAEQVGFPIGNGGRYDDLLAKFSRPAPATGFGLRVDRLIEAIGETDVRDDIECIVFSQERLAEAVELAEAKRAEGKRVVLQHIAGIRDIDAYSQRYRSIVYLLGRSGRDGQ.

Belongs to the class-II aminoacyl-tRNA synthetase family. HisZ subfamily. As to quaternary structure, heteromultimer composed of HisG and HisZ subunits.

The protein resides in the cytoplasm. It participates in amino-acid biosynthesis; L-histidine biosynthesis; L-histidine from 5-phospho-alpha-D-ribose 1-diphosphate: step 1/9. Required for the first step of histidine biosynthesis. May allow the feedback regulation of ATP phosphoribosyltransferase activity by histidine. This is ATP phosphoribosyltransferase regulatory subunit from Geobacillus kaustophilus (strain HTA426).